The following is a 209-amino-acid chain: Thymidine kinase (209 aa).

ATP is bound by residues 16 to 23 (GPMFAGKT) and 90 to 93 (DEAQ). The active-site Proton acceptor is the Glu-91.

It belongs to the thymidine kinase family. In terms of assembly, homotetramer.

The protein localises to the cytoplasm. It carries out the reaction thymidine + ATP = dTMP + ADP + H(+). This Onion yellows phytoplasma (strain OY-M) protein is Thymidine kinase.